We begin with the raw amino-acid sequence, 384 residues long: Histidinol-phosphate aminotransferase 2 (384 aa).

Residue K236 is modified to N6-(pyridoxal phosphate)lysine.

It belongs to the class-II pyridoxal-phosphate-dependent aminotransferase family. Histidinol-phosphate aminotransferase subfamily. Homodimer. Pyridoxal 5'-phosphate serves as cofactor.

It catalyses the reaction L-histidinol phosphate + 2-oxoglutarate = 3-(imidazol-4-yl)-2-oxopropyl phosphate + L-glutamate. The protein operates within amino-acid biosynthesis; L-histidine biosynthesis; L-histidine from 5-phospho-alpha-D-ribose 1-diphosphate: step 7/9. This chain is Histidinol-phosphate aminotransferase 2 (hisC2), found in Nostoc sp. (strain PCC 7120 / SAG 25.82 / UTEX 2576).